The sequence spans 109 residues: Juvenile hormone esterase, isoform A (109 aa).

This sequence belongs to the type-B carboxylesterase/lipase family. In terms of tissue distribution, fat body, the site of their biosynthesis, and the hemolymph where it is secreted.

The catalysed reaction is juvenile hormone I + H2O = juvenile hormone I carboxylate + methanol + H(+). It carries out the reaction juvenile hormone III + H2O = juvenile hormone III carboxylate + methanol + H(+). In terms of biological role, JH esterase plays a crucial role in the decrease of JH activity in lepidopteran insects, by hydrolyzing the methyl ester of JH. It is also involved in the transport of JH. This is Juvenile hormone esterase, isoform A from Trichoplusia ni (Cabbage looper).